We begin with the raw amino-acid sequence, 125 residues long: Histone H2A (125 aa).

Residues 1–18 are compositionally biased toward basic residues; that stretch reads MSGRGKGGKARAKAKSRS. The interval 1-21 is disordered; the sequence is MSGRGKGGKARAKAKSRSSRA. Position 2 is an N-acetylserine (Ser-2). Phosphoserine is present on Ser-2. Gln-104 bears the N5-methylglutamine mark.

It belongs to the histone H2A family. As to quaternary structure, the nucleosome is a histone octamer containing two molecules each of H2A, H2B, H3 and H4 assembled in one H3-H4 heterotetramer and two H2A-H2B heterodimers. The octamer wraps approximately 147 bp of DNA.

It localises to the nucleus. The protein localises to the chromosome. Core component of nucleosome. Nucleosomes wrap and compact DNA into chromatin, limiting DNA accessibility to the cellular machineries which require DNA as a template. Histones thereby play a central role in transcription regulation, DNA repair, DNA replication and chromosomal stability. DNA accessibility is regulated via a complex set of post-translational modifications of histones, also called histone code, and nucleosome remodeling. The polypeptide is Histone H2A (Asterias rubens (Common European starfish)).